We begin with the raw amino-acid sequence, 327 residues long: ATP-dependent 6-phosphofructokinase (327 aa).

Gly-12 provides a ligand contact to ATP. ADP-binding positions include 22–26 (RGVVR) and 55–60 (RYSVSD). Residues 73 to 74 (RF) and 103 to 106 (GDGS) contribute to the ATP site. Mg(2+) is bound at residue Asp-104. 127–129 (TID) is a substrate binding site. Catalysis depends on Asp-129, which acts as the Proton acceptor. An ADP-binding site is contributed by Arg-156. Residues Arg-164 and 171-173 (MGR) contribute to the substrate site. Residues 187-189 (GCE), Lys-213, and 215-217 (KKH) contribute to the ADP site. Substrate is bound by residues Glu-224, Arg-245, and 251–254 (HIQR).

It belongs to the phosphofructokinase type A (PFKA) family. ATP-dependent PFK group I subfamily. Prokaryotic clade 'B1' sub-subfamily. Homotetramer. It depends on Mg(2+) as a cofactor.

The protein localises to the cytoplasm. The enzyme catalyses beta-D-fructose 6-phosphate + ATP = beta-D-fructose 1,6-bisphosphate + ADP + H(+). The protein operates within carbohydrate degradation; glycolysis; D-glyceraldehyde 3-phosphate and glycerone phosphate from D-glucose: step 3/4. With respect to regulation, allosterically activated by ADP and other diphosphonucleosides, and allosterically inhibited by phosphoenolpyruvate. Its function is as follows. Catalyzes the phosphorylation of D-fructose 6-phosphate to fructose 1,6-bisphosphate by ATP, the first committing step of glycolysis. This chain is ATP-dependent 6-phosphofructokinase, found in Yersinia pseudotuberculosis serotype IB (strain PB1/+).